Here is a 533-residue protein sequence, read N- to C-terminus: Probable polyamine oxidase 5 (533 aa).

FAD contacts are provided by E37, R45, V262, and E501.

It belongs to the flavin monoamine oxidase family. FAD is required as a cofactor. In terms of tissue distribution, expressed in root vasculature, leaves and stems.

It localises to the cytoplasm. It catalyses the reaction spermine + O2 + H2O = 3-aminopropanal + spermidine + H2O2. The enzyme catalyses N(1)-acetylspermine + O2 + H2O = 3-acetamidopropanal + spermidine + H2O2. The catalysed reaction is norspermine + O2 + H2O = norspermidine + 3-aminopropanal + H2O2. It carries out the reaction thermospermine + O2 + H2O = 3-aminopropanal + spermidine + H2O2. It participates in amine and polyamine degradation; spermine degradation. Flavoenzyme involved in polyamine back-conversion. Catalyzes the oxidation of the secondary amino group of polyamines, such as spermine and its acetyl derivatives. Substrate preference is spermine &gt; N(1)-acetylspermine &gt; thermospermine &gt; norspermine. Plays an important role in the regulation of polyamine intracellular concentration. Involved in xylem differentiation by controlling thermospermine homeostasis, and participating in the tightly controlled interplay between auxin and cytokinin that is necessary for proper xylem differentiation. Involved in the production of hydrogen peroxide in response to salt and cold stresses. The protein is Probable polyamine oxidase 5 of Arabidopsis thaliana (Mouse-ear cress).